The following is a 454-amino-acid chain: UDP-N-acetylmuramate--L-alanine ligase (454 aa).

109 to 115 serves as a coordination point for ATP; the sequence is GTHGKTT.

The protein belongs to the MurCDEF family.

The protein resides in the cytoplasm. It catalyses the reaction UDP-N-acetyl-alpha-D-muramate + L-alanine + ATP = UDP-N-acetyl-alpha-D-muramoyl-L-alanine + ADP + phosphate + H(+). It participates in cell wall biogenesis; peptidoglycan biosynthesis. Its function is as follows. Cell wall formation. This is UDP-N-acetylmuramate--L-alanine ligase from Protochlamydia amoebophila (strain UWE25).